Consider the following 162-residue polypeptide: Corticoliberin-1 (162 aa).

Residues 1 to 24 form the signal peptide; it reads MKLNFLVTTVALLVAFPPPYECRA. The propeptide occupies 25–119; that stretch reads IDSSSNQPAT…ALDSEERERR (95 aa). Phe160 is modified (phenylalanine amide).

The protein belongs to the sauvagine/corticotropin-releasing factor/urotensin I family.

The protein resides in the secreted. This hormone from hypothalamus regulates the release of corticotropin from pituitary gland. This chain is Corticoliberin-1 (crf1), found in Catostomus commersonii (White sucker).